The following is a 325-amino-acid chain: UPF0285 protein MmarC7_1666 (325 aa).

It belongs to the UPF0285 family.

This is UPF0285 protein MmarC7_1666 from Methanococcus maripaludis (strain C7 / ATCC BAA-1331).